Here is a 222-residue protein sequence, read N- to C-terminus: MTTKLARFAQKRWISSTTSTSNMYDPRVFRDPVTNVQELRKPLDSDDERNFLFLKAMKSDATPVFYRDHVIDKLIRVCTKDGEKETSRKNVLSALEIIKRRQYKAWAKASEEEKKSIELDPFLVAKKGIKNCHPLMKLQGVTRGGTTYQVPFPIEEPEAEFRAMKMMRDICRVRSKHGETHFKDILATELLAASQNEGSTIQAKQELHKTCEANRAYAHYRA.

The N-terminal 14 residues, Met-1–Ile-14, are a transit peptide targeting the mitochondrion.

Belongs to the universal ribosomal protein uS7 family. Component of the mitochondrial ribosome small subunit (28S) which comprises a 12S rRNA and about 30 distinct proteins.

The protein localises to the mitochondrion. The polypeptide is Small ribosomal subunit protein uS7m (mrps-7) (Caenorhabditis elegans).